Reading from the N-terminus, the 133-residue chain is Small ribosomal subunit protein uS9 (133 aa).

Residues 101-133 (MKPKGLLTRDPREVERKKYGLKKARRAPQFSKR) form a disordered region. Basic and acidic residues predominate over residues 107-118 (LTRDPREVERKK). Residues 119-133 (YGLKKARRAPQFSKR) are compositionally biased toward basic residues.

This sequence belongs to the universal ribosomal protein uS9 family.

This Deinococcus radiodurans (strain ATCC 13939 / DSM 20539 / JCM 16871 / CCUG 27074 / LMG 4051 / NBRC 15346 / NCIMB 9279 / VKM B-1422 / R1) protein is Small ribosomal subunit protein uS9.